We begin with the raw amino-acid sequence, 277 residues long: Exosome complex component Rrp42 (277 aa).

It belongs to the RNase PH family. Rrp42 subfamily. As to quaternary structure, component of the archaeal exosome complex. Forms a hexameric ring-like arrangement composed of 3 Rrp41-Rrp42 heterodimers. The hexameric ring associates with a trimer of Rrp4 and/or Csl4 subunits.

The protein resides in the cytoplasm. In terms of biological role, non-catalytic component of the exosome, which is a complex involved in RNA degradation. Contributes to the structuring of the Rrp41 active site. The protein is Exosome complex component Rrp42 of Pyrococcus furiosus (strain ATCC 43587 / DSM 3638 / JCM 8422 / Vc1).